A 363-amino-acid polypeptide reads, in one-letter code: NAD(P)H-quinone oxidoreductase subunit 1, chloroplastic (363 aa).

8 consecutive transmembrane segments (helical) span residues 30-50, 98-118, 127-147, 165-185, 203-223, 248-268, 300-320, and 336-356; these read LVPI…IVWL, FSIG…VIPF, LSIG…GLLM, AAQS…ISLL, FWGW…ISSL, YSGI…LVSS, VFGT…FLFI, and LLNL…LLTT.

The protein belongs to the complex I subunit 1 family. As to quaternary structure, NDH is composed of at least 16 different subunits, 5 of which are encoded in the nucleus.

The protein localises to the plastid. It localises to the chloroplast thylakoid membrane. The catalysed reaction is a plastoquinone + NADH + (n+1) H(+)(in) = a plastoquinol + NAD(+) + n H(+)(out). It carries out the reaction a plastoquinone + NADPH + (n+1) H(+)(in) = a plastoquinol + NADP(+) + n H(+)(out). NDH shuttles electrons from NAD(P)H:plastoquinone, via FMN and iron-sulfur (Fe-S) centers, to quinones in the photosynthetic chain and possibly in a chloroplast respiratory chain. The immediate electron acceptor for the enzyme in this species is believed to be plastoquinone. Couples the redox reaction to proton translocation, and thus conserves the redox energy in a proton gradient. This is NAD(P)H-quinone oxidoreductase subunit 1, chloroplastic from Solanum bulbocastanum (Wild potato).